Consider the following 1469-residue polypeptide: uncharacterized protein (1469 aa).

Over residues 146 to 180 (GDHITPKEEEEKEKEKEKEKEKEKEKEKEKEKDSE) the composition is skewed to basic and acidic residues. 9 disordered regions span residues 146-186 (GDHI…LQEQ), 231-255 (IQNNQNNQNNNDSPINKEIEDDNNN), 306-344 (TTTTTTTTTSSSNNCTNSISNTDKSTTTNCPPVENGGDS), 430-455 (LNFNNNNNNNNNNNNNNNNNSQPYHY), 520-560 (PVKN…NNNS), 654-706 (TTTT…PLVR), 719-755 (RTQTQLQTKIQPKSPQPQPTAAPEPQKPPTPSIVKNQ), 881-958 (YNNI…NIIN), and 1329-1369 (NCSS…NSSN). Low complexity-rich tracts occupy residues 232-241 (QNNQNNQNNN), 306-327 (TTTTTTTTTSSSNNCTNSISNT), 430-449 (LNFNNNNNNNNNNNNNNNNN), 523-559 (NNNNNNNNNNNNNNNNNNNNNNNNNNNNNNNNNINNN), and 654-693 (TTTTTTNTNSTNTNSTINATSPPHTPKLSSSPLLTTTTTP). Over residues 719-731 (RTQTQLQTKIQPK) the composition is skewed to polar residues. Residues 732 to 749 (SPQPQPTAAPEPQKPPTP) show a composition bias toward pro residues. 2 stretches are compositionally biased toward low complexity: residues 1329-1347 (NCSSSSSSSESNGIDSGSE) and 1354-1369 (RSNTTNNSNNINNSSN).

This is an uncharacterized protein from Dictyostelium discoideum (Social amoeba).